The following is a 400-amino-acid chain: Probable S-adenosylmethionine synthase (400 aa).

Lys135 to Asp140 lines the ATP pocket.

This sequence belongs to the AdoMet synthase 2 family. Mg(2+) serves as cofactor.

The enzyme catalyses L-methionine + ATP + H2O = S-adenosyl-L-methionine + phosphate + diphosphate. The protein operates within amino-acid biosynthesis; S-adenosyl-L-methionine biosynthesis; S-adenosyl-L-methionine from L-methionine: step 1/1. Its function is as follows. Catalyzes the formation of S-adenosylmethionine from methionine and ATP. In Aquifex aeolicus (strain VF5), this protein is Probable S-adenosylmethionine synthase (mat).